We begin with the raw amino-acid sequence, 100 residues long: Putative pterin-4-alpha-carbinolamine dehydratase (100 aa).

It belongs to the pterin-4-alpha-carbinolamine dehydratase family.

The enzyme catalyses (4aS,6R)-4a-hydroxy-L-erythro-5,6,7,8-tetrahydrobiopterin = (6R)-L-erythro-6,7-dihydrobiopterin + H2O. This Bradyrhizobium sp. (strain ORS 278) protein is Putative pterin-4-alpha-carbinolamine dehydratase.